A 474-amino-acid polypeptide reads, in one-letter code: MNDKIVVDVLKLYLKRDPSLTEFHMLKSQYKNIQRVNIFNKEIFISLIKKNKKKFFSDIKSSPSDIKRSILTYFSKQENTYSIGKLYTIIELQSILVTTYTDVLGILTTKGPDLFTSNIYYNTSSMQSLARDALNFMNVAQMTDKTMGRHNVSSLVDNVNSLMEEYLRRHNKNCICYGSYSLHLLNPDVKYGDIDILQTNSRTFLIDLAFLIKFITGLNVVLLKVPYLKNYMVLKDQNDSHIIDSFNIRQDTMQSIPKVLIDNIYIVDPALQLMSMLKMFSQIDRLEDLAKNPEKLTVRLATLLEYVRVNYGINFISNQTKKNNMPMYSVIDIDKRIITVDTSNYDFPFKKCLVYLDESSLSSDILDLNADDAIDFENVSNSAFLINNNILYTYFSNTILMKSKTDIHEISSRGLSAHILIYQILTKGDIIKPLTDIVNSLIGVEKNPIYDIIPRDKKSGKHGIIDIEKDIITH.

Active-site residues include aspartate 193 and aspartate 195.

This sequence belongs to the poxviridae poly(A) polymerase catalytic subunit family. Heterodimer of a large (catalytic) subunit and a small (regulatory) subunit.

It catalyses the reaction RNA(n) + ATP = RNA(n)-3'-adenine ribonucleotide + diphosphate. Functionally, polymerase that creates the 3'-poly(A) tail of mRNA's. In Bos taurus (Bovine), this protein is Poly(A) polymerase catalytic subunit (PAPL).